Here is a 62-residue protein sequence, read N- to C-terminus: Calmodulin regulator protein PCP4 (62 aa).

The tract at residues 1–39 (MSERQGAGATNGKDKTSGENDGQKKVQEEFDIDMDAPET) is disordered. Residues 12 to 28 (GKDKTSGENDGQKKVQE) are compositionally biased toward basic and acidic residues. Residues 28–40 (EEFDIDMDAPETE) are acidic; binds calcium and is required for modulating the calcium-binding kinetics of calmodulin. The IQ domain occupies 39 to 62 (TERAAVAIQSQFRKFQKKKAGSQS).

Belongs to the PCP4 family. Binds to both calcium-free and calcium-bound calmodulin. The affinity for the calcium-bound form is 50-fold greater.

In terms of biological role, functions as a modulator of calcium-binding by calmodulin. Thereby, regulates calmodulin activity and the different processes it controls. For instance, may play a role in neuronal differentiation through activation of calmodulin-dependent kinase signaling pathways. The sequence is that of Calmodulin regulator protein PCP4 from Homo sapiens (Human).